The following is an 806-amino-acid chain: ATP-dependent zinc metalloprotease FTSH 11, chloroplastic/mitochondrial (806 aa).

A chloroplast and mitochondrion-targeting transit peptide spans 1 to 63; sequence MSSSTLQASL…RFRPLPCSLR (63 aa). Basic and acidic residues predominate over residues 106–116; it reads FVGGEETKSGG. Residues 106-130 form a disordered region; the sequence is FVGGEETKSGGEEAEVSNGVTEGKE. A helical membrane pass occupies residues 301–321; the sequence is LVSTILFTVAVGLVWIMGAAA. An ATP-binding site is contributed by 402–409; it reads GAPGTGKT. His620 contributes to the Zn(2+) binding site. Glu621 is a catalytic residue. Zn(2+)-binding residues include His624 and Asp698.

The protein in the N-terminal section; belongs to the AAA ATPase family. This sequence in the C-terminal section; belongs to the peptidase M41 family. As to quaternary structure, homooligomer. Zn(2+) is required as a cofactor.

The protein localises to the mitochondrion inner membrane. The protein resides in the plastid. It is found in the chloroplast thylakoid membrane. Its function is as follows. Probable ATP-dependent zinc metallopeptidase. Involved in the assembly and/or stability of the complexes I and V. Involved in thermotolerance but not in high light stress resistance or in the assembly/stability of the complexes I and V of the mitochondrial oxidative phosphorylation system. In Arabidopsis thaliana (Mouse-ear cress), this protein is ATP-dependent zinc metalloprotease FTSH 11, chloroplastic/mitochondrial (FTSH11).